The following is a 396-amino-acid chain: Capsular polysaccharide biosynthesis protein CapF (396 aa).

Transmembrane regions (helical) follow at residues 7 to 27 (YMFV…LVIV), 41 to 61 (ALVI…SVIV), 74 to 94 (AILS…YVLG), 101 to 121 (ILIV…YGIY), 129 to 149 (LLGI…YIIY), 153 to 173 (HNLN…FAII), 198 to 218 (IFIL…NTGI), 232 to 252 (LGIF…ANSI), 279 to 299 (MVFI…FLGE), 315 to 335 (IILI…FLGT), 351 to 371 (LILL…YSLL), and 372 to 392 (GAAL…YYFY).

This sequence belongs to the polysaccharide synthase family.

The protein localises to the cell membrane. It participates in capsule biogenesis; capsule polysaccharide biosynthesis. Its function is as follows. Required for the biosynthesis of type 1 capsular polysaccharide. The chain is Capsular polysaccharide biosynthesis protein CapF (capF) from Staphylococcus aureus.